The following is a 349-amino-acid chain: Fructose-1,6-bisphosphatase class 1 (349 aa).

Mg(2+) is bound by residues Glu92, Asp113, Leu115, and Asp116. Residues 116 to 119 (DGSS), Asn209, Tyr242, and Lys272 each bind substrate. Glu278 serves as a coordination point for Mg(2+).

This sequence belongs to the FBPase class 1 family. In terms of assembly, homotetramer. Mg(2+) serves as cofactor.

Its subcellular location is the cytoplasm. The enzyme catalyses beta-D-fructose 1,6-bisphosphate + H2O = beta-D-fructose 6-phosphate + phosphate. The protein operates within carbohydrate biosynthesis; Calvin cycle. The chain is Fructose-1,6-bisphosphatase class 1 from Chloroherpeton thalassium (strain ATCC 35110 / GB-78).